Consider the following 452-residue polypeptide: Methionine aminopeptidase 2-1 (452 aa).

Residues 1 to 100 (MAAKVADDVA…VRIDEVFPND (100 aa)) form a disordered region. The span at 37 to 51 (EHDDSDDDNEAEDGA) shows a compositional bias: acidic residues. Positions 60 to 73 (KKKKKRKPRKKKKA) are enriched in basic residues. A substrate-binding site is contributed by H205. Residues D225, D236, and H305 each coordinate a divalent metal cation. H313 is a substrate binding site. E338 and E433 together coordinate a divalent metal cation.

The protein belongs to the peptidase M24A family. Methionine aminopeptidase eukaryotic type 2 subfamily. Requires Co(2+) as cofactor. It depends on Zn(2+) as a cofactor. Mn(2+) serves as cofactor. Fe(2+) is required as a cofactor.

It is found in the cytoplasm. It carries out the reaction Release of N-terminal amino acids, preferentially methionine, from peptides and arylamides.. Its function is as follows. Cotranslationally removes the N-terminal methionine from nascent proteins. The N-terminal methionine is often cleaved when the second residue in the primary sequence is small and uncharged (Met-Ala-, Cys, Gly, Pro, Ser, Thr, or Val). This chain is Methionine aminopeptidase 2-1, found in Pyrenophora teres f. teres (strain 0-1) (Barley net blotch fungus).